The chain runs to 135 residues: DNA-directed RNA polymerase subunit omega (135 aa).

Positions 84-106 are disordered; sequence IAGHSSHVSPSRSSRHTGLGKSF.

The protein belongs to the RNA polymerase subunit omega family. As to quaternary structure, the RNAP catalytic core consists of 2 alpha, 1 beta, 1 beta' and 1 omega subunit. When a sigma factor is associated with the core the holoenzyme is formed, which can initiate transcription.

It carries out the reaction RNA(n) + a ribonucleoside 5'-triphosphate = RNA(n+1) + diphosphate. Its function is as follows. Promotes RNA polymerase assembly. Latches the N- and C-terminal regions of the beta' subunit thereby facilitating its interaction with the beta and alpha subunits. The sequence is that of DNA-directed RNA polymerase subunit omega from Anaplasma phagocytophilum (strain HZ).